A 271-amino-acid polypeptide reads, in one-letter code: NH(3)-dependent NAD(+) synthetase (271 aa).

An ATP-binding site is contributed by 43 to 50; that stretch reads GISGGQDS. Asp49 contacts Mg(2+). Arg137 contributes to the deamido-NAD(+) binding site. Thr157 is an ATP binding site. Residue Glu162 participates in Mg(2+) binding. Lys170 and Asp177 together coordinate deamido-NAD(+). The ATP site is built by Lys186 and Thr208. Position 257–258 (257–258) interacts with deamido-NAD(+); that stretch reads HK.

It belongs to the NAD synthetase family. As to quaternary structure, homodimer.

It carries out the reaction deamido-NAD(+) + NH4(+) + ATP = AMP + diphosphate + NAD(+) + H(+). The protein operates within cofactor biosynthesis; NAD(+) biosynthesis; NAD(+) from deamido-NAD(+) (ammonia route): step 1/1. Functionally, catalyzes the ATP-dependent amidation of deamido-NAD to form NAD. Uses ammonia as a nitrogen source. This Exiguobacterium sibiricum (strain DSM 17290 / CCUG 55495 / CIP 109462 / JCM 13490 / 255-15) protein is NH(3)-dependent NAD(+) synthetase.